A 430-amino-acid chain; its full sequence is Adenylosuccinate synthetase (430 aa).

GTP-binding positions include 12–18 and 40–42; these read GDEGKGK and GHT. Aspartate 13 functions as the Proton acceptor in the catalytic mechanism. Mg(2+)-binding residues include aspartate 13 and glycine 40. IMP is bound by residues 13–16, 38–41, threonine 128, arginine 142, glutamine 223, threonine 238, and arginine 302; these read DEGK and NAGH. Histidine 41 (proton donor) is an active-site residue. GTP contacts are provided by residues 330-332 and 412-414; these read SID and SVG.

Belongs to the adenylosuccinate synthetase family. As to quaternary structure, homodimer. Mg(2+) serves as cofactor.

The protein localises to the cytoplasm. It catalyses the reaction IMP + L-aspartate + GTP = N(6)-(1,2-dicarboxyethyl)-AMP + GDP + phosphate + 2 H(+). It functions in the pathway purine metabolism; AMP biosynthesis via de novo pathway; AMP from IMP: step 1/2. Functionally, plays an important role in the de novo pathway of purine nucleotide biosynthesis. Catalyzes the first committed step in the biosynthesis of AMP from IMP. This is Adenylosuccinate synthetase from Bacillus subtilis (strain 168).